The primary structure comprises 399 residues: MAKEKFNRTKPHVNIGTIGHVDHGKTTLSAAISAVLSLKGLAEMKDYDNIDNAPEEKERGITIATSHIEYETENRHYAHVDCPGHADYVKNMITGAAQMDGAILVVSAADGPMPQTREHILLSRQVGVPHIVVFLNKQDMVDDQELLELVEMEVRELLSAYEFPGDDTPIVAGSALRALEEAKAGNVGEWGEKVLKLMAEVDAYIPTPERDTEKTFLMPVEDVFSIAGRGTVVTGRIERGVVKVGDEVEIVGIRATQKTTVTGVEMFRKELEKGEAGDNVGVLLRGTKKEEVERGMVLCKPGSITPHKKFEGEIYVLSKEEGGRHTPFFTNYRPQFYVRTTDVTGSITLPEGVEMVMPGDNVKITVELISPVALELGTKFAIREGGRTVGAGVVSNIIE.

A tr-type G domain is found at 10–209 (KPHVNIGTIG…EVDAYIPTPE (200 aa)). Positions 19–26 (GHVDHGKT) are G1. Residue 19 to 26 (GHVDHGKT) coordinates GTP. Threonine 26 lines the Mg(2+) pocket. A G2 region spans residues 60–64 (GITIA). The segment at 81 to 84 (DCPG) is G3. Residues 81–85 (DCPGH) and 136–139 (NKQD) each bind GTP. Residues 136–139 (NKQD) are G4. Residues 174–176 (SAL) form a G5 region.

The protein belongs to the TRAFAC class translation factor GTPase superfamily. Classic translation factor GTPase family. EF-Tu/EF-1A subfamily. Monomer.

The protein localises to the cytoplasm. It carries out the reaction GTP + H2O = GDP + phosphate + H(+). In terms of biological role, GTP hydrolase that promotes the GTP-dependent binding of aminoacyl-tRNA to the A-site of ribosomes during protein biosynthesis. The protein is Elongation factor Tu of Helicobacter pylori (strain Shi470).